The sequence spans 510 residues: ATP synthase subunit alpha 1 (510 aa).

167–174 (GDRATGKT) contributes to the ATP binding site.

It belongs to the ATPase alpha/beta chains family. As to quaternary structure, F-type ATPases have 2 components, CF(1) - the catalytic core - and CF(0) - the membrane proton channel. CF(1) has five subunits: alpha(3), beta(3), gamma(1), delta(1), epsilon(1). CF(0) has three main subunits: a(1), b(2) and c(9-12). The alpha and beta chains form an alternating ring which encloses part of the gamma chain. CF(1) is attached to CF(0) by a central stalk formed by the gamma and epsilon chains, while a peripheral stalk is formed by the delta and b chains.

It localises to the cell inner membrane. The enzyme catalyses ATP + H2O + 4 H(+)(in) = ADP + phosphate + 5 H(+)(out). Produces ATP from ADP in the presence of a proton gradient across the membrane. The alpha chain is a regulatory subunit. In Paraburkholderia xenovorans (strain LB400), this protein is ATP synthase subunit alpha 1.